Consider the following 93-residue polypeptide: Small ribosomal subunit protein uS19 (93 aa).

This sequence belongs to the universal ribosomal protein uS19 family.

Its function is as follows. Protein S19 forms a complex with S13 that binds strongly to the 16S ribosomal RNA. The chain is Small ribosomal subunit protein uS19 from Synechococcus sp. (strain JA-2-3B'a(2-13)) (Cyanobacteria bacterium Yellowstone B-Prime).